We begin with the raw amino-acid sequence, 464 residues long: Adenylyltransferase and sulfurtransferase MOCS3 (464 aa).

ATP-binding positions include glycine 101, aspartate 122, 129-133, lysine 146, and 190-191; these read NNMHR and DN. Residues cysteine 231 and cysteine 234 each contribute to the Zn(2+) site. Cysteine 248 acts as the Glycyl thioester intermediate; for adenylyltransferase activity in catalysis. Residues cysteine 306 and cysteine 309 each coordinate Zn(2+). Residues 358–462 form the Rhodanese domain; sequence KKEQHVLLDV…WAANVNPNFP (105 aa). The Cysteine persulfide intermediate; for sulfurtransferase activity role is filled by cysteine 422.

In the N-terminal section; belongs to the HesA/MoeB/ThiF family. UBA4 subfamily. Requires Zn(2+) as cofactor.

The protein localises to the cytoplasm. The catalysed reaction is [molybdopterin-synthase sulfur-carrier protein]-C-terminal Gly-Gly + ATP + H(+) = [molybdopterin-synthase sulfur-carrier protein]-C-terminal Gly-Gly-AMP + diphosphate. The enzyme catalyses [molybdopterin-synthase sulfur-carrier protein]-C-terminal Gly-Gly-AMP + S-sulfanyl-L-cysteinyl-[cysteine desulfurase] + AH2 = [molybdopterin-synthase sulfur-carrier protein]-C-terminal-Gly-aminoethanethioate + L-cysteinyl-[cysteine desulfurase] + A + AMP + 2 H(+). It participates in tRNA modification; 5-methoxycarbonylmethyl-2-thiouridine-tRNA biosynthesis. It functions in the pathway cofactor biosynthesis; molybdopterin biosynthesis. Plays a central role in 2-thiolation of mcm(5)S(2)U at tRNA wobble positions of cytosolic tRNA(Lys), tRNA(Glu) and tRNA(Gln). Also essential during biosynthesis of the molybdenum cofactor. Acts by mediating the C-terminal thiocarboxylation of sulfur carriers URM1 and MOCS2A. Its N-terminus first activates URM1 and MOCS2A as acyl-adenylates (-COAMP), then the persulfide sulfur on the catalytic cysteine is transferred to URM1 and MOCS2A to form thiocarboxylation (-COSH) of their C-terminus. The reaction probably involves hydrogen sulfide that is generated from the persulfide intermediate and that acts as a nucleophile towards URM1 and MOCS2A. Subsequently, a transient disulfide bond is formed. Does not use thiosulfate as sulfur donor; NFS1 probably acting as a sulfur donor for thiocarboxylation reactions. In Arabidopsis thaliana (Mouse-ear cress), this protein is Adenylyltransferase and sulfurtransferase MOCS3.